The primary structure comprises 153 residues: Endoribonuclease YbeY (153 aa).

Zn(2+) contacts are provided by His114, His118, and His124.

Belongs to the endoribonuclease YbeY family. The cofactor is Zn(2+).

The protein resides in the cytoplasm. Its function is as follows. Single strand-specific metallo-endoribonuclease involved in late-stage 70S ribosome quality control and in maturation of the 3' terminus of the 16S rRNA. In Shewanella baltica (strain OS223), this protein is Endoribonuclease YbeY.